A 102-amino-acid polypeptide reads, in one-letter code: Co-chaperonin GroES (102 aa).

Belongs to the GroES chaperonin family. Heptamer of 7 subunits arranged in a ring. Interacts with the chaperonin GroEL.

The protein localises to the cytoplasm. In terms of biological role, together with the chaperonin GroEL, plays an essential role in assisting protein folding. The GroEL-GroES system forms a nano-cage that allows encapsulation of the non-native substrate proteins and provides a physical environment optimized to promote and accelerate protein folding. GroES binds to the apical surface of the GroEL ring, thereby capping the opening of the GroEL channel. This Streptomyces avermitilis (strain ATCC 31267 / DSM 46492 / JCM 5070 / NBRC 14893 / NCIMB 12804 / NRRL 8165 / MA-4680) protein is Co-chaperonin GroES.